A 282-amino-acid chain; its full sequence is Bis(5'-nucleosyl)-tetraphosphatase, symmetrical (282 aa).

This sequence belongs to the Ap4A hydrolase family.

It carries out the reaction P(1),P(4)-bis(5'-adenosyl) tetraphosphate + H2O = 2 ADP + 2 H(+). Hydrolyzes diadenosine 5',5'''-P1,P4-tetraphosphate to yield ADP. The chain is Bis(5'-nucleosyl)-tetraphosphatase, symmetrical from Shigella dysenteriae serotype 1 (strain Sd197).